Here is a 329-residue protein sequence, read N- to C-terminus: Cuticle collagen 6 (329 aa).

5 triple-helical region regions span residues G142–D171, G189–P212, G216–L248, G253–S279, and G282–C320. Residues P146–Y329 are disordered. A compositionally biased stretch (basic and acidic residues) spans D156–E173. A compositionally biased stretch (low complexity) spans P187–P199. Pro residues predominate over residues K200–P212. Residues V251 to N272 show a composition bias toward pro residues. Residues P273–G282 are compositionally biased toward low complexity. The segment covering C320 to Y329 has biased composition (pro residues).

It belongs to the cuticular collagen family. In terms of assembly, collagen polypeptide chains are complexed within the cuticle by disulfide bonds and other types of covalent cross-links.

Nematode cuticles are composed largely of collagen-like proteins. The cuticle functions both as an exoskeleton and as a barrier to protect the worm from its environment. The sequence is that of Cuticle collagen 6 from Caenorhabditis elegans.